The chain runs to 786 residues: Endonuclease MutS2 (786 aa).

332–339 (GPNTGGKT) contacts ATP. In terms of domain architecture, Smr spans 711-786 (IDLRGMDSEE…GTGVTVVILK (76 aa)).

This sequence belongs to the DNA mismatch repair MutS family. MutS2 subfamily. In terms of assembly, homodimer. Binds to stalled ribosomes, contacting rRNA.

Functionally, endonuclease that is involved in the suppression of homologous recombination and thus may have a key role in the control of bacterial genetic diversity. Acts as a ribosome collision sensor, splitting the ribosome into its 2 subunits. Detects stalled/collided 70S ribosomes which it binds and splits by an ATP-hydrolysis driven conformational change. Acts upstream of the ribosome quality control system (RQC), a ribosome-associated complex that mediates the extraction of incompletely synthesized nascent chains from stalled ribosomes and their subsequent degradation. Probably generates substrates for RQC. This chain is Endonuclease MutS2, found in Clostridium perfringens (strain SM101 / Type A).